Consider the following 539-residue polypeptide: Ell-associated factor Eaf (539 aa).

Residues 119–539 (TRSEMTHHKP…SSNSSDDDDD (421 aa)) are disordered. Residues 132–146 (PATNINHNNIPMSTN) are compositionally biased toward polar residues. A compositionally biased stretch (pro residues) spans 151-163 (GPGPGPGSGPSPP). Over residues 174–195 (KLENSTMRISSKTKVSTGSRRN) the composition is skewed to polar residues. Position 205 is a phosphoserine (S205). Positions 220 to 238 (RSPQSAPAWNANNAQQTLP) are enriched in polar residues. Low complexity-rich tracts occupy residues 267-278 (SGSSTGSSTGQP), 309-337 (MHQN…YGRG), and 345-375 (NNYA…SHHS). Over residues 420–435 (DSSDSDSGSESDDSTD) the composition is skewed to acidic residues. Low complexity-rich tracts occupy residues 461 to 493 (HQQL…QPQQ) and 520 to 533 (NDLL…SSNS).

It belongs to the EAF family.

Its subcellular location is the nucleus. Functionally, promotes transcriptional elongation by Su(Tpl)/ELL. Essential for development. The protein is Ell-associated factor Eaf of Drosophila willistoni (Fruit fly).